Here is a 107-residue protein sequence, read N- to C-terminus: Large ribosomal subunit protein uL24 (107 aa).

It belongs to the universal ribosomal protein uL24 family. In terms of assembly, part of the 50S ribosomal subunit.

One of two assembly initiator proteins, it binds directly to the 5'-end of the 23S rRNA, where it nucleates assembly of the 50S subunit. Its function is as follows. One of the proteins that surrounds the polypeptide exit tunnel on the outside of the subunit. The chain is Large ribosomal subunit protein uL24 from Streptomyces griseus subsp. griseus (strain JCM 4626 / CBS 651.72 / NBRC 13350 / KCC S-0626 / ISP 5235).